A 93-amino-acid chain; its full sequence is Parbolysin P3 (93 aa).

Disulfide bonds link cysteine 16–cysteine 37, cysteine 22–cysteine 33, and cysteine 47–cysteine 60.

It belongs to the worm cytolysin family. Localized within the skin and proboscis and are most readily isolated from body mucus secretions.

It is found in the secreted. In terms of biological role, cytolysin that shows hemolytic activity (on bovine erythrocytes, HC(50)=5.75 mg/ml). This hemolytic activity is completely inhibited by small unilamelar vesicles composed of PC/PG, PC/PI and PC/PS in 1:1 molar ratios (with at least 100 mg/ml concentration). In Parborlasia corrugatus (Antarctic nemertean worm), this protein is Parbolysin P3.